We begin with the raw amino-acid sequence, 132 residues long: Protein NrdI (132 aa).

This sequence belongs to the NrdI family.

Its function is as follows. Probably involved in ribonucleotide reductase function. The protein is Protein NrdI of Agrobacterium fabrum (strain C58 / ATCC 33970) (Agrobacterium tumefaciens (strain C58)).